A 29-amino-acid polypeptide reads, in one-letter code: Galanin (29 aa).

At A29 the chain carries Alanine amide.

Belongs to the galanin family.

Its subcellular location is the secreted. Contracts smooth muscle of the gastrointestinal and genitourinary tract, regulates growth hormone release, modulates insulin release, and may be involved in the control of adrenal secretion. The chain is Galanin (GAL) from Ovis aries (Sheep).